A 147-amino-acid polypeptide reads, in one-letter code: Acidic phospholipase A2 S3-24 (147 aa).

Residues 1–19 (MYPAHLLVLLAVCVSLLGA) form the signal peptide. The propeptide occupies 20–27 (SDMPPQPL). 7 disulfides stabilise this stretch: Cys38–Cys99, Cys54–Cys146, Cys56–Cys72, Cys71–Cys127, Cys78–Cys120, Cys88–Cys113, and Cys106–Cys118. Residues Tyr55, Gly57, and Gly59 each contribute to the Ca(2+) site. His75 is an active-site residue. Asp76 is a Ca(2+) binding site. Asp121 is an active-site residue.

It belongs to the phospholipase A2 family. Group I subfamily. D49 sub-subfamily. The cofactor is Ca(2+). In terms of tissue distribution, expressed by the venom gland.

It is found in the secreted. The enzyme catalyses a 1,2-diacyl-sn-glycero-3-phosphocholine + H2O = a 1-acyl-sn-glycero-3-phosphocholine + a fatty acid + H(+). In terms of biological role, snake venom phospholipase A2 (PLA2) that inhibits collagen-induced platelet aggregation. PLA2 catalyzes the calcium-dependent hydrolysis of the 2-acyl groups in 3-sn-phosphoglycerides. The sequence is that of Acidic phospholipase A2 S3-24 from Austrelaps superbus (Lowland copperhead snake).